The following is a 313-amino-acid chain: Probable inactive peptidyl-prolyl cis-trans isomerase-like 6 (313 aa).

Residues 147–310 (YLDICIDLSP…LLCSIADSGV (164 aa)) enclose the PPIase cyclophilin-type domain.

The protein belongs to the cyclophilin-type PPIase family.

In terms of biological role, probable inactive PPIase with no peptidyl-prolyl cis-trans isomerase activity. The protein is Probable inactive peptidyl-prolyl cis-trans isomerase-like 6 of Mus musculus (Mouse).